Consider the following 161-residue polypeptide: Large ribosomal subunit protein uL23m (161 aa).

The N-terminal 34 residues, 1 to 34, are a transit peptide targeting the mitochondrion; that stretch reads MSKIAGKRLVYFPNITFTLCRGLNLQPKFAVFRV.

Belongs to the universal ribosomal protein uL23 family. Component of the mitochondrial large ribosomal subunit (mt-LSU). Mature yeast 74S mitochondrial ribosomes consist of a small (37S) and a large (54S) subunit. The 37S small subunit contains a 15S ribosomal RNA (15S mt-rRNA) and at least 32 different proteins. The 54S large subunit contains a 21S rRNA (21S mt-rRNA) and at least 45 different proteins. uL23m forms the wall of the exit tunnel. Interacts with the C-terminus of OXA1.

The protein resides in the mitochondrion. Functionally, component of the mitochondrial ribosome (mitoribosome), a dedicated translation machinery responsible for the synthesis of mitochondrial genome-encoded proteins, including at least some of the essential transmembrane subunits of the mitochondrial respiratory chain. The mitoribosomes are attached to the mitochondrial inner membrane and translation products are cotranslationally integrated into the membrane. This chain is Large ribosomal subunit protein uL23m (mrp20), found in Schizosaccharomyces pombe (strain 972 / ATCC 24843) (Fission yeast).